The chain runs to 58 residues: UPF0391 membrane protein Shewmr4_2671 (58 aa).

2 consecutive transmembrane segments (helical) span residues 6–26 (LMFLVVAIIAGLFGFTGIAGA) and 28–48 (AGIAKIIFFLFIVLLVISLLV).

Belongs to the UPF0391 family.

The protein localises to the cell membrane. In Shewanella sp. (strain MR-4), this protein is UPF0391 membrane protein Shewmr4_2671.